Reading from the N-terminus, the 491-residue chain is Ketol-acid reductoisomerase (NADP(+)) (491 aa).

Positions 15 to 208 constitute a KARI N-terminal Rossmann domain; that stretch reads AQLGKCRFMA…GGHRAGVLES (194 aa). NADP(+)-binding positions include 45 to 48, R68, R76, S78, and 108 to 110; these read CGAQ and DKQ. H132 is a catalytic residue. G158 contacts NADP(+). KARI C-terminal knotted domains lie at 209-344 and 345-484; these read SFVA…NAPQ and FEGK…MTDM. Residues D217, E221, E389, and E393 each coordinate Mg(2+). Residue S414 coordinates substrate.

This sequence belongs to the ketol-acid reductoisomerase family. Mg(2+) is required as a cofactor.

It carries out the reaction (2R)-2,3-dihydroxy-3-methylbutanoate + NADP(+) = (2S)-2-acetolactate + NADPH + H(+). It catalyses the reaction (2R,3R)-2,3-dihydroxy-3-methylpentanoate + NADP(+) = (S)-2-ethyl-2-hydroxy-3-oxobutanoate + NADPH + H(+). Its pathway is amino-acid biosynthesis; L-isoleucine biosynthesis; L-isoleucine from 2-oxobutanoate: step 2/4. It participates in amino-acid biosynthesis; L-valine biosynthesis; L-valine from pyruvate: step 2/4. In terms of biological role, involved in the biosynthesis of branched-chain amino acids (BCAA). Catalyzes an alkyl-migration followed by a ketol-acid reduction of (S)-2-acetolactate (S2AL) to yield (R)-2,3-dihydroxy-isovalerate. In the isomerase reaction, S2AL is rearranged via a Mg-dependent methyl migration to produce 3-hydroxy-3-methyl-2-ketobutyrate (HMKB). In the reductase reaction, this 2-ketoacid undergoes a metal-dependent reduction by NADPH to yield (R)-2,3-dihydroxy-isovalerate. This chain is Ketol-acid reductoisomerase (NADP(+)), found in Serratia proteamaculans (strain 568).